Consider the following 376-residue polypeptide: Protein STRICTOSIDINE SYNTHASE-LIKE 8 (376 aa).

The first 31 residues, 1–31 (MPISRRVLTPITAAPVILAVLCFFFWSSIIG), serve as a signal peptide directing secretion. 3 N-linked (GlcNAc...) asparagine glycosylation sites follow: Asn-98, Asn-172, and Asn-224.

This sequence belongs to the strictosidine synthase family.

It is found in the vacuole. This is Protein STRICTOSIDINE SYNTHASE-LIKE 8 from Arabidopsis thaliana (Mouse-ear cress).